The following is a 323-amino-acid chain: Sphingolipid delta(4)-desaturase/C4-monooxygenase DES2 (323 aa).

The N-myristoyl glycine moiety is linked to residue Gly-2. Transmembrane regions (helical) follow at residues 45–65 and 68–88; these read WTVT…QGLA and WLFF…TLAI. Residues 89–93 carry the Histidine box-1 motif; the sequence is HDISH. The tract at residues 95-99 is required for C4-hydroxylase activity; it reads TAFGT. Residues 128–132 carry the Histidine box-2 motif; sequence HVDHH. Residues 209–231 traverse the membrane as a helical segment; that stretch reads MVYLLASSLLGLGLHPISGHFVA. Residues 259–263 carry the Histidine box-3 motif; the sequence is HMEHH.

It belongs to the fatty acid desaturase type 1 family. DEGS subfamily.

It localises to the endoplasmic reticulum membrane. The catalysed reaction is a dihydroceramide + 2 Fe(II)-[cytochrome b5] + O2 + 2 H(+) = a phytoceramide + 2 Fe(III)-[cytochrome b5] + H2O. It catalyses the reaction an N-acylsphinganine + 2 Fe(II)-[cytochrome b5] + O2 + 2 H(+) = an N-acylsphing-4-enine + 2 Fe(III)-[cytochrome b5] + 2 H2O. It carries out the reaction N-octanoylsphinganine + 2 Fe(II)-[cytochrome b5] + O2 + 2 H(+) = N-octanoyl-4-hydroxysphinganine + 2 Fe(III)-[cytochrome b5] + H2O. The enzyme catalyses an N-acylsphinganine + 2 Fe(II)-[cytochrome b5] + O2 + 2 H(+) = an N-acyl-(4R)-4-hydroxysphinganine + 2 Fe(III)-[cytochrome b5] + H2O. The protein operates within membrane lipid metabolism; sphingolipid biosynthesis. Bifunctional enzyme which acts both as a sphingolipid delta(4)-desaturase and a sphingolipid C4-monooxygenase. The chain is Sphingolipid delta(4)-desaturase/C4-monooxygenase DES2 from Bos taurus (Bovine).